The sequence spans 661 residues: UvrABC system protein B (661 aa).

The Helicase ATP-binding domain occupies 26-181 (KGIQEGRKHQ…LLRKLVDIQY (156 aa)). 39-46 (GATGTGKT) contacts ATP. Positions 92–115 (YYDYYQPEAYVPQTDTFIEKDASI) match the Beta-hairpin motif. The 167-residue stretch at 430-596 (QIDDLIGEIQ…TINKEIRDVI (167 aa)) folds into the Helicase C-terminal domain. A UVR domain is found at 625 to 660 (QKVVEQMEHEMKEAARALDFERAAELRDLLLELKAE).

Belongs to the UvrB family. As to quaternary structure, forms a heterotetramer with UvrA during the search for lesions. Interacts with UvrC in an incision complex.

It localises to the cytoplasm. The UvrABC repair system catalyzes the recognition and processing of DNA lesions. A damage recognition complex composed of 2 UvrA and 2 UvrB subunits scans DNA for abnormalities. Upon binding of the UvrA(2)B(2) complex to a putative damaged site, the DNA wraps around one UvrB monomer. DNA wrap is dependent on ATP binding by UvrB and probably causes local melting of the DNA helix, facilitating insertion of UvrB beta-hairpin between the DNA strands. Then UvrB probes one DNA strand for the presence of a lesion. If a lesion is found the UvrA subunits dissociate and the UvrB-DNA preincision complex is formed. This complex is subsequently bound by UvrC and the second UvrB is released. If no lesion is found, the DNA wraps around the other UvrB subunit that will check the other stand for damage. The chain is UvrABC system protein B from Bacillus velezensis (strain DSM 23117 / BGSC 10A6 / LMG 26770 / FZB42) (Bacillus amyloliquefaciens subsp. plantarum).